The chain runs to 193 residues: ATP-dependent Clp protease proteolytic subunit (193 aa).

Ser-98 functions as the Nucleophile in the catalytic mechanism. His-123 is a catalytic residue.

It belongs to the peptidase S14 family. In terms of assembly, fourteen ClpP subunits assemble into 2 heptameric rings which stack back to back to give a disk-like structure with a central cavity, resembling the structure of eukaryotic proteasomes.

Its subcellular location is the cytoplasm. The enzyme catalyses Hydrolysis of proteins to small peptides in the presence of ATP and magnesium. alpha-casein is the usual test substrate. In the absence of ATP, only oligopeptides shorter than five residues are hydrolyzed (such as succinyl-Leu-Tyr-|-NHMec, and Leu-Tyr-Leu-|-Tyr-Trp, in which cleavage of the -Tyr-|-Leu- and -Tyr-|-Trp bonds also occurs).. Its function is as follows. Cleaves peptides in various proteins in a process that requires ATP hydrolysis. Has a chymotrypsin-like activity. Plays a major role in the degradation of misfolded proteins. This is ATP-dependent Clp protease proteolytic subunit from Pasteurella multocida (strain Pm70).